The primary structure comprises 353 residues: MENKFARTVLGDIPVEKLGITDCHDHFIKNGGPEVEEHIDFLMLNVDASIKEFKEFIDRGGSTIVTMDPPNVGRDVLKTLEIANAVKNLGGNVIMSTGFHKAKFYDKYSSWLAVVPTEEIVKMCVAEIEEGMDEYNYNGPVVKRSKAKAGIIKAGTGYGAIDRLELKALEVAARTSILTGCPILVHTQLGTMALEVAKHLIGFGANPDKIQISHLNKNPDKYYYEKVIKETGVTLCFDGPDRVKYYPDSLLAENIKYLVDKGLQKHITLSLDAGRILYQRNYGLTKGKQTFGLAYLFDRFLPLLKQVGVSKEAIFDILVNNPKRVLAFDEKRNFDPLKVSKEVLELKKELNLN.

Positions 24, 26, 153, 186, and 214 each coordinate Zn(2+). N6-carboxylysine is present on K153. A substrate-binding site is contributed by 244–245 (KY). Residue D272 coordinates Zn(2+). Residue 275–278 (RILY) participates in substrate binding.

This sequence belongs to the metallo-dependent hydrolases superfamily. Phosphotriesterase family. The cofactor is Zn(2+).

The catalysed reaction is a 1,4-lactone + H2O = a 4-hydroxyacid + H(+). It catalyses the reaction D-xylono-1,4-lactone 5-phosphate + H2O = 5-phospho-D-xylonate + H(+). It carries out the reaction L-arabino-1,4-lactone 5-phosphate + H2O = 5-phospho-L-arabinonate + H(+). Its function is as follows. Catalyzes the hydrolysis of D-xylono-1,4-lactone-5-phosphate and L-arabino-1,4-lactone-5-phosphate. Also able to hydrolyze carboxy 1,4-lactones. This Mycoplasmopsis synoviae (strain 53) (Mycoplasma synoviae) protein is Phospho-furanose lactonase.